Here is a 673-residue protein sequence, read N- to C-terminus: Leucine zipper putative tumor suppressor 3 (673 aa).

3 disordered regions span residues 1–157 (MAKL…CSEP), 172–239 (FHSM…QHLA), and 251–317 (IGTA…PPSP). The span at 79 to 92 (SRERPGRYPSEDKG) shows a compositional bias: basic and acidic residues. Residues 173–186 (HSMQNLCPPQTNGT) show a composition bias toward polar residues. The segment covering 215–235 (GLSDSGRNSLTSLPTYSSSYS) has biased composition (low complexity). Residues 258 to 269 (SGSGGSSGGGSG) show a composition bias toward gly residues. Over residues 274-294 (GTSDSGRASSKSGSSSSMGRP) the composition is skewed to low complexity. A compositionally biased stretch (gly residues) spans 295-307 (GHLGSGEGGGGGL). 2 positions are modified to phosphoserine: Ser316 and Ser318. 2 coiled-coil regions span residues 317–496 (PSAL…SLRD) and 571–639 (RALR…RLRE). The interval 635-673 (RRLRERGAAGGASTPTPQHGEEKKAWTPSRLERIESTEI) is disordered. Residues 653 to 673 (HGEEKKAWTPSRLERIESTEI) are compositionally biased toward basic and acidic residues.

This sequence belongs to the LZTS3 family. As to quaternary structure, interacts (via C-terminus) with SHANK3 (via PDZ domain). Interacts (via coiled coil) with SIPA1L1. Can form homooligomers.

It localises to the synapse. The protein localises to the postsynaptic density. It is found in the cell projection. The protein resides in the dendritic spine. Its subcellular location is the dendrite. It localises to the cytoplasm. The protein localises to the cytoskeleton. May be involved in promoting the maturation of dendritic spines, probably via regulating SIPA1L1 levels at the postsynaptic density of synapses. This Homo sapiens (Human) protein is Leucine zipper putative tumor suppressor 3.